The sequence spans 194 residues: Holliday junction branch migration complex subunit RuvA (194 aa).

Positions 1–64 (MIAYIQGSIT…QDAHTLYGFS (64 aa)) are domain I. A domain II region spans residues 65–143 (TIEEKQCFLQ…KVGNMLSLQP (79 aa)). Residues 144–150 (SGQEAIY) form a flexible linker region. Positions 150-194 (YQEALAALSKLGIHKSTAEKTVAAILKEHQGEITVESLIKLALKG) are domain III.

This sequence belongs to the RuvA family. As to quaternary structure, homotetramer. Forms an RuvA(8)-RuvB(12)-Holliday junction (HJ) complex. HJ DNA is sandwiched between 2 RuvA tetramers; dsDNA enters through RuvA and exits via RuvB. An RuvB hexamer assembles on each DNA strand where it exits the tetramer. Each RuvB hexamer is contacted by two RuvA subunits (via domain III) on 2 adjacent RuvB subunits; this complex drives branch migration. In the full resolvosome a probable DNA-RuvA(4)-RuvB(12)-RuvC(2) complex forms which resolves the HJ.

It localises to the cytoplasm. Its function is as follows. The RuvA-RuvB-RuvC complex processes Holliday junction (HJ) DNA during genetic recombination and DNA repair, while the RuvA-RuvB complex plays an important role in the rescue of blocked DNA replication forks via replication fork reversal (RFR). RuvA specifically binds to HJ cruciform DNA, conferring on it an open structure. The RuvB hexamer acts as an ATP-dependent pump, pulling dsDNA into and through the RuvAB complex. HJ branch migration allows RuvC to scan DNA until it finds its consensus sequence, where it cleaves and resolves the cruciform DNA. This is Holliday junction branch migration complex subunit RuvA from Amoebophilus asiaticus (strain 5a2).